The sequence spans 165 residues: Ribosome maturation factor RimM (165 aa).

One can recognise a PRC barrel domain in the interval 90–161 (PDTYYVSDLK…KIIIKPVGEW (72 aa)).

The protein belongs to the RimM family. As to quaternary structure, binds ribosomal protein uS19.

It is found in the cytoplasm. An accessory protein needed during the final step in the assembly of 30S ribosomal subunit, possibly for assembly of the head region. Essential for efficient processing of 16S rRNA. May be needed both before and after RbfA during the maturation of 16S rRNA. It has affinity for free ribosomal 30S subunits but not for 70S ribosomes. This Clostridium beijerinckii (strain ATCC 51743 / NCIMB 8052) (Clostridium acetobutylicum) protein is Ribosome maturation factor RimM.